The primary structure comprises 742 residues: ATP-dependent RNA helicase DBP7 (742 aa).

Positions 45-100 are disordered; it reads GKTVSRKRKANTTGDEGIIPGRGENSIKKLHKESSYSSEEQEKYKGRNAHNTQGRT. Positions 143–172 match the Q motif motif; it reads DQFASLGVSSLLVSHLEQKMRIKKPTSIQK. The region spanning 178-372 is the Helicase ATP-binding domain; it reads IIGNAGKNDF…NVALKDYKLI (195 aa). 191 to 198 is a binding site for ATP; it reads AQTGSGKT. Positions 307-310 match the DEGD box motif; the sequence is DEGD. In terms of domain architecture, Helicase C-terminal spans 405–605; that stretch reads TLAATLNNIT…ILMPAFKDVN (201 aa). The interval 701–726 is disordered; that stretch reads AMGLQSSKDGNSEKKPTKENSKNKMF. The span at 710–722 shows a compositional bias: basic and acidic residues; that stretch reads GNSEKKPTKENSK.

It belongs to the DEAD box helicase family. DDX31/DBP7 subfamily.

It localises to the nucleus. The protein resides in the nucleolus. The catalysed reaction is ATP + H2O = ADP + phosphate + H(+). In terms of biological role, ATP-binding RNA helicase involved in the biogenesis of 60S ribosomal subunits and is required for the normal formation of 25S and 5.8S rRNAs. The chain is ATP-dependent RNA helicase DBP7 (DBP7) from Saccharomyces cerevisiae (strain ATCC 204508 / S288c) (Baker's yeast).